Here is a 183-residue protein sequence, read N- to C-terminus: Ferritin heavy chain (183 aa).

Methionine 1 is subject to N-acetylmethionine. Threonine 2 is modified (N-acetylthreonine; in Ferritin heavy chain, N-terminally processed). In terms of domain architecture, Ferritin-like diiron spans 11 to 160 (QNYHQDSEAA…DHVTNLRKMG (150 aa)). Fe cation-binding residues include glutamate 28, glutamate 63, histidine 66, glutamate 108, and glutamine 142. Phosphoserine occurs at positions 179 and 183.

Belongs to the ferritin family. As to quaternary structure, oligomer of 24 subunits. There are two types of subunits: L (light) chain and H (heavy) chain. The major chain can be light or heavy, depending on the species and tissue type. The functional molecule forms a roughly spherical shell with a diameter of 12 nm and contains a central cavity into which the insoluble mineral iron core is deposited. Interacts with NCOA4; NCOA4 promotes targeting of the iron-binding ferritin complex to autolysosomes following starvation or iron depletion. In terms of tissue distribution, ubiquitous.

Its subcellular location is the cytoplasm. The protein resides in the lysosome. It localises to the cytoplasmic vesicle. The protein localises to the autophagosome. It carries out the reaction 4 Fe(2+) + O2 + 4 H(+) = 4 Fe(3+) + 2 H2O. Functionally, stores iron in a soluble, non-toxic, readily available form. Important for iron homeostasis. Has ferroxidase activity. Iron is taken up in the ferrous form and deposited as ferric hydroxides after oxidation. Also plays a role in delivery of iron to cells. Mediates iron uptake in capsule cells of the developing kidney. Delivery to lysosomes is mediated by the cargo receptor NCOA4 for autophagic degradation and release of iron. This chain is Ferritin heavy chain (FTH1), found in Trichosurus vulpecula (Brush-tailed possum).